Reading from the N-terminus, the 132-residue chain is Small ribosomal subunit protein uS8c (132 aa).

Belongs to the universal ribosomal protein uS8 family. As to quaternary structure, part of the 30S ribosomal subunit.

The protein resides in the plastid. It localises to the chloroplast. Its function is as follows. One of the primary rRNA binding proteins, it binds directly to 16S rRNA central domain where it helps coordinate assembly of the platform of the 30S subunit. In Rhodomonas salina (Cryptomonas salina), this protein is Small ribosomal subunit protein uS8c (rps8).